The primary structure comprises 513 residues: MSDAHDTIKSLTGDASNSRRLIVVSNRLPITIKRKDNGTYDFSMSSGGLVSALSGLKKLMTFQWLGWCGQEIPEDEKPMIIQRLQDECSAIPVFLDDETADRHYNGFSNSILWPLFHYHPGEINFDEENWEAYRAANYAFAEAIVKNLQDGDLIWVQDYHLMVLPQMLRELIGDKFKDIKIGFFLHTPFPSSEIYRVLPVRNEILEGVLNCDLVGFHTYDYARHFLSACSRILNLSTLPNGVEYNGQMVSVGTFPIGIDPEKFSDALKSDVVKDRIASIERRLQGVKVIVGVDRLDYIKGVPQKFHAFEVFLEQYPEWVGKVVLVQVAVPSRQDVEEYQNLRAVVNELVGRINGRFGTVEYTPIHFLHKSVRFEELVALYNVSDVCLITSTRDGMNLVSYEYICTQQERHGALILSEFAGAAQSLNGSIVINPWNTEELANSIHDALTMPEKQREANENKLFRYVNKYTSQFWGQSFVGELQRIQHYSHPHPRRTNPILRTKSAQVLSMNSSS.

The residue at position 40 (Y40) is a Phosphotyrosine. Residues Y104 and D158 each contribute to the D-glucose 6-phosphate site. Residues R294 and K299 each contribute to the UDP site. UDP-alpha-D-glucose-binding residues include R294 and K299. R332 provides a ligand contact to D-glucose 6-phosphate. UDP-alpha-D-glucose is bound at residue 393-401; that stretch reads DGMNLVSYE. 397–401 contributes to the UDP binding site; it reads LVSYE. At S503 the chain carries Phosphoserine.

This sequence belongs to the glycosyltransferase 20 family. In terms of assembly, homomer. Component of the trehalose synthase complex that contains at least tps1, ntp1 and tpp1. Interacts with tpp1. Interacts with ntp1; the interaction is independent of stress conditions.

It is found in the cytoplasm. Its subcellular location is the nucleus. The enzyme catalyses D-glucose 6-phosphate + UDP-alpha-D-glucose = alpha,alpha-trehalose 6-phosphate + UDP + H(+). The protein operates within carbohydrate biosynthesis. In terms of biological role, synthase catalytic subunit of the trehalose synthase complex that catalyzes the production of trehalose from glucose-6-phosphate and UDP-alpha-D-glucose in a two step process. The disaccharide trehalose serves as a storage carbohydrate that is mobilized during nutrient stress and spore germination. Together with ntp1, regulates the level of trehalose as a protectant for cell integrity during thermal and osmotic stress. This Schizosaccharomyces pombe (strain 972 / ATCC 24843) (Fission yeast) protein is Alpha,alpha-trehalose-phosphate synthase [UDP-forming].